Consider the following 835-residue polypeptide: Lon protease (835 aa).

In terms of domain architecture, Lon N-terminal spans 4 to 224 (LPYIAIRNQL…LAINMLINAI (221 aa)). 412 to 419 (GPPGTGKT) provides a ligand contact to ATP. The region spanning 649–832 (QPKAGVVNAL…DEIFKYIFEA (184 aa)) is the Lon proteolytic domain. Active-site residues include Ser-738 and Lys-781.

It belongs to the peptidase S16 family. As to quaternary structure, homohexamer. Organized in a ring with a central cavity.

Its subcellular location is the cytoplasm. It catalyses the reaction Hydrolysis of proteins in presence of ATP.. ATP-dependent serine protease that mediates the selective degradation of mutant and abnormal proteins as well as certain short-lived regulatory proteins. Required for cellular homeostasis and for survival from DNA damage and developmental changes induced by stress. Degrades polypeptides processively to yield small peptide fragments that are 5 to 10 amino acids long. Binds to DNA in a double-stranded, site-specific manner. This is Lon protease from Metamycoplasma arthritidis (strain 158L3-1) (Mycoplasma arthritidis).